The chain runs to 150 residues: MQIILLDKVVNLGNLGEIVKVKDGYARNFLIPTGRARRATEAAKAEFEAKRAELEKAAAEKLAAAQAQGEKLAGTTVKLTQKAGVDGRLFGSVTNHDIAEELNKQGYNVVKSQVRLPNGPIKVVGDNTVTVALHTDVAVEVTVSVYGETA.

Belongs to the bacterial ribosomal protein bL9 family.

Binds to the 23S rRNA. The polypeptide is Large ribosomal subunit protein bL9 (Acidovorax ebreus (strain TPSY) (Diaphorobacter sp. (strain TPSY))).